Reading from the N-terminus, the 416-residue chain is RNA polymerase sigma-C factor (416 aa).

The short motif at 205–218 (DLVQEGTLGLERAV) is the Polymerase core binding element. Positions 374–393 (LAEIGRALDLSRERVRQIES) form a DNA-binding region, H-T-H motif.

The protein belongs to the sigma-70 factor family.

Sigma factors are initiation factors that promote the attachment of RNA polymerase to specific initiation sites and are then released. The protein is RNA polymerase sigma-C factor (sigC) of Nostoc sp. (strain PCC 7120 / SAG 25.82 / UTEX 2576).